Reading from the N-terminus, the 344-residue chain is Holliday junction branch migration complex subunit RuvB (344 aa).

Residues 1–182 (MRIELLNTPP…FGINSRFDYY (182 aa)) are large ATPase domain (RuvB-L). Residues I21, R22, G63, K66, T67, T68, 129-131 (EDF), R172, Y182, and R219 contribute to the ATP site. Residue T67 coordinates Mg(2+). Residues 183–253 (APELLEGIIR…IAMKTLDCLE (71 aa)) are small ATPAse domain (RuvB-S). Positions 256–344 (EEGLDDMDKK…ISLFDAQPTS (89 aa)) are head domain (RuvB-H). Residues R311 and R316 each contribute to the DNA site.

The protein belongs to the RuvB family. As to quaternary structure, homohexamer. Forms an RuvA(8)-RuvB(12)-Holliday junction (HJ) complex. HJ DNA is sandwiched between 2 RuvA tetramers; dsDNA enters through RuvA and exits via RuvB. An RuvB hexamer assembles on each DNA strand where it exits the tetramer. Each RuvB hexamer is contacted by two RuvA subunits (via domain III) on 2 adjacent RuvB subunits; this complex drives branch migration. In the full resolvosome a probable DNA-RuvA(4)-RuvB(12)-RuvC(2) complex forms which resolves the HJ.

The protein localises to the cytoplasm. The catalysed reaction is ATP + H2O = ADP + phosphate + H(+). Functionally, the RuvA-RuvB-RuvC complex processes Holliday junction (HJ) DNA during genetic recombination and DNA repair, while the RuvA-RuvB complex plays an important role in the rescue of blocked DNA replication forks via replication fork reversal (RFR). RuvA specifically binds to HJ cruciform DNA, conferring on it an open structure. The RuvB hexamer acts as an ATP-dependent pump, pulling dsDNA into and through the RuvAB complex. RuvB forms 2 homohexamers on either side of HJ DNA bound by 1 or 2 RuvA tetramers; 4 subunits per hexamer contact DNA at a time. Coordinated motions by a converter formed by DNA-disengaged RuvB subunits stimulates ATP hydrolysis and nucleotide exchange. Immobilization of the converter enables RuvB to convert the ATP-contained energy into a lever motion, pulling 2 nucleotides of DNA out of the RuvA tetramer per ATP hydrolyzed, thus driving DNA branch migration. The RuvB motors rotate together with the DNA substrate, which together with the progressing nucleotide cycle form the mechanistic basis for DNA recombination by continuous HJ branch migration. Branch migration allows RuvC to scan DNA until it finds its consensus sequence, where it cleaves and resolves cruciform DNA. In Pelodictyon phaeoclathratiforme (strain DSM 5477 / BU-1), this protein is Holliday junction branch migration complex subunit RuvB.